Here is a 43-residue protein sequence, read N- to C-terminus: Protein PsbN (43 aa).

Residues 7–29 (VTIFLSGLLVSFTGYALYTAFGQ) traverse the membrane as a helical segment.

This sequence belongs to the PsbN family.

It is found in the plastid. The protein localises to the chloroplast thylakoid membrane. May play a role in photosystem I and II biogenesis. The chain is Protein PsbN from Ipomoea purpurea (Common morning glory).